A 213-amino-acid polypeptide reads, in one-letter code: Protein brother (213 aa).

The interval H189 to W213 is disordered. The span at G203–W213 shows a compositional bias: gly residues.

The protein belongs to the CBF-beta family.

It is found in the nucleus. Its function is as follows. Regulates the DNA-binding properties of Runt. The polypeptide is Protein brother (Bro) (Drosophila melanogaster (Fruit fly)).